The primary structure comprises 296 residues: Stanniocalcin-2 (296 aa).

The N-terminal stretch at 1–24 (MCAERLGQFVTLALVFATLDPARG) is a signal peptide. The tract at residues 22–44 (ARGTDSTNPPEGPQDRGSQQKGR) is disordered. N-linked (GlcNAc...) asparagine glycosylation occurs at Asn73. Positions 236 to 296 (RPYHRDTDHH…EQSEYSDIRR (61 aa)) are disordered. Basic and acidic residues predominate over residues 238–258 (YHRDTDHHLTANRGAKGERGS).

It belongs to the stanniocalcin family. In terms of assembly, homodimer; disulfide-linked. As to expression, expressed in a variety of tissues. Strongly expressed in ovary and to a lesser extent in kidney.

The protein localises to the secreted. Its function is as follows. Has an anti-hypocalcemic action on calcium and phosphate homeostasis. The polypeptide is Stanniocalcin-2 (Stc2) (Rattus norvegicus (Rat)).